The primary structure comprises 289 residues: 4-diphosphocytidyl-2-C-methyl-D-erythritol kinase (289 aa).

Lys10 is a catalytic residue. Position 94-104 (94-104 (PVAAGLAGGSS)) interacts with ATP. Asp136 is an active-site residue.

It belongs to the GHMP kinase family. IspE subfamily.

The catalysed reaction is 4-CDP-2-C-methyl-D-erythritol + ATP = 4-CDP-2-C-methyl-D-erythritol 2-phosphate + ADP + H(+). It functions in the pathway isoprenoid biosynthesis; isopentenyl diphosphate biosynthesis via DXP pathway; isopentenyl diphosphate from 1-deoxy-D-xylulose 5-phosphate: step 3/6. In terms of biological role, catalyzes the phosphorylation of the position 2 hydroxy group of 4-diphosphocytidyl-2C-methyl-D-erythritol. This Bacillus cereus (strain G9842) protein is 4-diphosphocytidyl-2-C-methyl-D-erythritol kinase.